Reading from the N-terminus, the 567-residue chain is TNF receptor-associated factor 3 (567 aa).

Positions 1–26 (MESSKKMDAAGTLQPNPPLKLQPDRG) are disordered. Cysteine 55 participates in a covalent cross-link: Glycyl cysteine thioester (Cys-Gly) (interchain with G-Cter in ubiquitin). The RING-type zinc-finger motif lies at 67–76 (CGHRFCESCM). Lysine 106 participates in a covalent cross-link: Glycyl lysine isopeptide (Lys-Gly) (interchain with G-Cter in ubiquitin). Residue cysteine 123 forms a Glycyl cysteine thioester (Cys-Gly) (interchain with G-Cter in ubiquitin) linkage. 2 TRAF-type zinc fingers span residues 134–189 (VHLK…IKLQ) and 190–248 (KHED…QQIK). Residues lysine 155 and lysine 167 each participate in a glycyl lysine isopeptide (Lys-Gly) (interchain with G-Cter in ubiquitin) cross-link. Residues 266 to 337 (SNSLEKKVSL…KLKELDKEIR (72 aa)) adopt a coiled-coil conformation. Lysine 328 participates in a covalent cross-link: Glycyl lysine isopeptide (Lys-Gly) (interchain with G-Cter in ubiquitin). Residues 414–559 (NGVLIWKIRD…DDTIFIKVIV (146 aa)) enclose the MATH domain.

The protein belongs to the TNF receptor-associated factor family. A subfamily. In terms of assembly, homotrimer. Heterotrimer with TRAF2 and TRAF5. Interacts with LTBR/TNFRSF3, TNFRSF4, TNFRSF5/CD40, TNFRSF8/CD30, TNFRSF13C TNFRSF17/BCMA, TLR4 and EDAR. Interacts with MAP3K5, MAP3K14, TRAIP/TRIP, TDP2/TTRAP, TANK/ITRAF and TRAF3IP1. Interaction with TNFRSF5/CD40 is modulated by TANK/ITRAF, which competes for the same binding site. Interacts with TICAM1. Interacts with TRAFD1. Interacts with OTUB1, OTUB2 and OTUD5. Interacts with RNF216, OPTN and TBK1. Identified in a complex with TRAF2, MAP3K14 and BIRC3. Upon exposure to bacterial lipopolysaccharide (LPS), recruited to a transient complex containing TLR4, TRAF3, TRAF6, IKBKG, MAP3K7, MYD88, TICAM1, BIRC2, BIRC3 and UBE2N. Interacts (via RING-type zinc finger domain) with SRC. Interacts with CARD14. Interacts (via MATH domain) with PTPN22; the interaction promotes TRAF3 polyubiquitination. Interacts with MAVS. Directly interacts with DDX3X; this interaction stimulates TRAF3 'Lys-63' ubiquitination. Interacts with IRF3. Interacts with IKBKE in the course of viral infection. Interacts with TRIM35. Interacts with GAPDH; promoting TRAF3 ubiquitination. Interacts with PPP3CA and PPP3CB. Interacts with RALGDS. Interacts with FBXO11. Undergoes 'Lys-48'-linked polyubiquitination, leading to its proteasomal degradation in response to signaling by TNFSF13B, TLR4 or through CD40. 'Lys-48'-linked polyubiquitinated form is deubiquitinated by OTUD7B, preventing TRAF3 proteolysis and over-activation of non-canonical NF-kappa-B. Undergoes 'Lys-63'-linked ubiquitination during early stages of virus infection, and 'Lys-48'-linked ubiquitination during later stages. Undergoes both 'Lys-48'-linked and 'Lys-63'-linked ubiquitination in response to TLR3 and TLR4 signaling. 'Lys-63'-linked ubiquitination can be mediated by TRIM35. Deubiquitinated by OTUB1, OTUB2 and OTUD5. Undergoes 'Lys-63'-linked deubiquitination by MYSM1 to terminate the pattern-recognition receptors/PRRs pathways. Ubiquitinated at Lys-328 by the SCF(FBXL2) complex, leading to its degradation by the proteasome. In terms of processing, undergoes 'Lys-48'-linked polyubiquitination, leading to its proteasomal degradation in response to signaling by TNFSF13B, TLR4 or through CD40. 'Lys-48'-linked polyubiquitinated form is deubiquitinated by OTUD7B, preventing TRAF3 proteolysis and over-activation of non-canonical NF-kappa-B. Undergoes 'Lys-63'-linked ubiquitination during early stages of virus infection, and 'Lys-48'-linked ubiquitination during later stages. Undergoes both 'Lys-48'-linked and 'Lys-63'-linked ubiquitination in response to TLR3 and TLR4 signaling. 'Lys-63'-linked ubiquitination can be mediated by TRIM35. Deubiquitinated by OTUB1, OTUB2 and OTUD5. Undergoes 'Lys-63'-linked deubiquitination by MYSM1 to terminate the pattern-recognition receptors/PRRs pathways. Also undergoes 'Lys-29'-linked ubiquitination on Cys-55 and Cys-123 by NEDD4L; leading to increased 'Lys-48'- and 'Lys-63'-linked ubiquitination as well as increased binding to TBK1. TLR4 signals emanating from bacteria containing vesicles trigger 'Lys-33'-linked polyubiquitination that promotes the assembly of the exocyst complex thereby connecting innate immune signaling to the cellular trafficking apparatus. Deubiquitinated by USP25 during viral infection, leading to TRAF3 stabilization and type I interferon production. 'Lys-63'-linked ubiquitination by FBXO11 in a NEDD8-dependent manner promotes the amplification of IFN-I signaling. In terms of tissue distribution, detected in bone marrow macrophages and spleen B-cells (at protein level). In adult, highest in brain. Also found in kidney, heart, thymus, spleen, lung, muscle, testis and ovary. Not found in liver.

It localises to the cytoplasm. The protein resides in the endosome. The protein localises to the mitochondrion. The enzyme catalyses S-ubiquitinyl-[E2 ubiquitin-conjugating enzyme]-L-cysteine + [acceptor protein]-L-lysine = [E2 ubiquitin-conjugating enzyme]-L-cysteine + N(6)-ubiquitinyl-[acceptor protein]-L-lysine.. Its function is as follows. Cytoplasmic E3 ubiquitin ligase that regulates various signaling pathways, such as the NF-kappa-B, mitogen-activated protein kinase (MAPK) and interferon regulatory factor (IRF) pathways, and thus controls a lot of biological processes in both immune and non-immune cell types. In TLR and RLR signaling pathways, acts as an E3 ubiquitin ligase promoting the synthesis of 'Lys-63'-linked polyubiquitin chains on several substrates such as ASC that lead to the activation of the type I interferon response or the inflammasome. Following the activation of certain TLRs such as TLR4, acts as a negative NF-kappa-B regulator, possibly to avoid unregulated inflammatory response, and its degradation via 'Lys-48'-linked polyubiquitination is required for MAPK activation and production of inflammatory cytokines. Alternatively, when TLR4 orchestrates bacterial expulsion, TRAF3 undergoes 'Lys-33'-linked polyubiquitination and subsequently binds to RALGDS, mobilizing the exocyst complex to rapidly expel intracellular bacteria back for clearance. Also acts as a constitutive negative regulator of the alternative NF-kappa-B pathway, which controls B-cell survival and lymphoid organ development. Required for normal antibody isotype switching from IgM to IgG. Plays a role T-cell dependent immune responses. Down-regulates proteolytic processing of NFKB2, and thereby inhibits non-canonical activation of NF-kappa-B. Promotes ubiquitination and proteasomal degradation of MAP3K14. The protein is TNF receptor-associated factor 3 of Mus musculus (Mouse).